Reading from the N-terminus, the 129-residue chain is Small ribosomal subunit protein uS8 (129 aa).

The protein belongs to the universal ribosomal protein uS8 family. As to quaternary structure, part of the 30S ribosomal subunit. Contacts proteins S5 and S12.

Functionally, one of the primary rRNA binding proteins, it binds directly to 16S rRNA central domain where it helps coordinate assembly of the platform of the 30S subunit. This Legionella pneumophila (strain Corby) protein is Small ribosomal subunit protein uS8.